Consider the following 117-residue polypeptide: uncharacterized protein (117 aa).

The protein resides in the cytoplasm. It localises to the nucleus. This is an uncharacterized protein from Saccharomyces cerevisiae (strain ATCC 204508 / S288c) (Baker's yeast).